Consider the following 417-residue polypeptide: NADH-quinone oxidoreductase subunit D (417 aa).

Belongs to the complex I 49 kDa subunit family. NDH-1 is composed of 14 different subunits. Subunits NuoB, C, D, E, F, and G constitute the peripheral sector of the complex.

It is found in the cell inner membrane. The catalysed reaction is a quinone + NADH + 5 H(+)(in) = a quinol + NAD(+) + 4 H(+)(out). NDH-1 shuttles electrons from NADH, via FMN and iron-sulfur (Fe-S) centers, to quinones in the respiratory chain. The immediate electron acceptor for the enzyme in this species is believed to be ubiquinone. Couples the redox reaction to proton translocation (for every two electrons transferred, four hydrogen ions are translocated across the cytoplasmic membrane), and thus conserves the redox energy in a proton gradient. The chain is NADH-quinone oxidoreductase subunit D from Cupriavidus necator (strain ATCC 17699 / DSM 428 / KCTC 22496 / NCIMB 10442 / H16 / Stanier 337) (Ralstonia eutropha).